The sequence spans 455 residues: 1-deoxy-D-xylulose 5-phosphate reductoisomerase (455 aa).

Residues T30, G31, S32, I33, Q63, and N159 each contribute to the NADPH site. A 1-deoxy-D-xylulose 5-phosphate-binding site is contributed by K160. E161 provides a ligand contact to NADPH. D185 contacts Mn(2+). 2 residues coordinate 1-deoxy-D-xylulose 5-phosphate: S186 and E187. E187 is a Mn(2+) binding site. The span at 205–214 (YATAKQSIQP) shows a compositional bias: polar residues. The tract at residues 205-233 (YATAKQSIQPESVRATDPPSSTTDSPAKT) is disordered. 1-deoxy-D-xylulose 5-phosphate contacts are provided by S246 and H269. Residue G275 coordinates NADPH. The 1-deoxy-D-xylulose 5-phosphate site is built by S282, N287, K288, and E291. E291 provides a ligand contact to Mn(2+).

It belongs to the DXR family. Requires Mg(2+) as cofactor. Mn(2+) serves as cofactor.

It catalyses the reaction 2-C-methyl-D-erythritol 4-phosphate + NADP(+) = 1-deoxy-D-xylulose 5-phosphate + NADPH + H(+). It participates in isoprenoid biosynthesis; isopentenyl diphosphate biosynthesis via DXP pathway; isopentenyl diphosphate from 1-deoxy-D-xylulose 5-phosphate: step 1/6. Functionally, catalyzes the NADPH-dependent rearrangement and reduction of 1-deoxy-D-xylulose-5-phosphate (DXP) to 2-C-methyl-D-erythritol 4-phosphate (MEP). This Rhodopirellula baltica (strain DSM 10527 / NCIMB 13988 / SH1) protein is 1-deoxy-D-xylulose 5-phosphate reductoisomerase.